Here is a 108-residue protein sequence, read N- to C-terminus: Guanine nucleotide-binding protein subunit gamma (108 aa).

The S-palmitoyl cysteine moiety is linked to residue Cys104. The residue at position 105 (Cys105) is a Cysteine methyl ester. Cys105 is lipidated: S-farnesyl cysteine. Positions 106–108 (VIS) are cleaved as a propeptide — removed in mature form.

The protein belongs to the G protein gamma family. G proteins are composed of 3 units, alpha, beta and gamma.

The protein localises to the membrane. This Yarrowia lipolytica (strain CLIB 122 / E 150) (Yeast) protein is Guanine nucleotide-binding protein subunit gamma.